Reading from the N-terminus, the 192-residue chain is Probable molybdenum cofactor guanylyltransferase (192 aa).

Residues 8 to 10 (LAG), Lys-20, Asp-69, and Asp-94 contribute to the GTP site. Asp-94 contributes to the Mg(2+) binding site.

This sequence belongs to the MobA family. Mg(2+) is required as a cofactor.

The protein resides in the cytoplasm. The catalysed reaction is Mo-molybdopterin + GTP + H(+) = Mo-molybdopterin guanine dinucleotide + diphosphate. Transfers a GMP moiety from GTP to Mo-molybdopterin (Mo-MPT) cofactor (Moco or molybdenum cofactor) to form Mo-molybdopterin guanine dinucleotide (Mo-MGD) cofactor. The polypeptide is Probable molybdenum cofactor guanylyltransferase (Pyrococcus horikoshii (strain ATCC 700860 / DSM 12428 / JCM 9974 / NBRC 100139 / OT-3)).